A 520-amino-acid chain; its full sequence is MKMTSIQQRAELHRQIWQIANDVRGSVDGWDFKQYVLGALFYRFISENFSSYIEAGDDSICYAKLDDSVITDDIKDDAIKTKGYFIYPSQLFCNVAAKANTNDRLNADLNSIFVAIESSAYGYPSEADIKGLFADFDTTSNRLGNTVKDKNARLAAVLKGVEGLKLGDFNEHQIDLFGDAYEFLISNYAANAGKSGGEFFTPQHVSKLIAQLAMHGQTHVNKIYDPAAGSGSLLLQAKKQFDNHIIEEGFFGQEINHTTYNLARMNMFLHNINYDKFDIKLGNTLTEPHFRDEKPFDAIVSNPPYSVKWIGSDDPTLINDERFAPAGVLAPKSKADFAFVLHALNYLSAKGRAAIVCFPGIFYRGGAEQKIRQYLVDNNYVETVISLAPNLFFGTTIAVNILVLSKHKTDTNVQFIDASELFKKETNNNILTDAHIEQIMQVFASKEDVAHLAKSVAFETVVANDYNLSVSSYVEAKDNREIIDIAELNAELKTTVSKIDQLRKDIDAIVAEIEGCEVQK.

The interval Ala10–Ala190 is N-terminal domain. Residues Glu198–Gln203, Ser230–Ser232, and Glu254 each bind S-adenosyl-L-methionine. The catalytic domain stretch occupies residues Glu198–Tyr473. Residues Glu481 to Val510 are C-terminal tail.

This sequence belongs to the N(4)/N(6)-methyltransferase family. In terms of assembly, the type I restriction/modification system is composed of three polypeptides R, M and S; the restriction enzyme has stoichiometry R(2)M(2)S(1) while the methyltransferase is M(2)S(1). There is an equilibrium between R(2)M(2)S(1) and R(1)M(2)S(1); the latter is methylation and translocation proficient but restriction deficient. As to quaternary structure, (Microbial infection) Holoenenzyme interacts with Escherichia phage T7 protein Ocr; this interaction leads to the inhibition of the restriction activity, but may still allow methylation and translocation.

The catalysed reaction is a 2'-deoxyadenosine in DNA + S-adenosyl-L-methionine = an N(6)-methyl-2'-deoxyadenosine in DNA + S-adenosyl-L-homocysteine + H(+). In terms of biological role, the subtype gamma methyltransferase (M) subunit of a type I restriction enzyme. The M and S subunits together form a methyltransferase (MTase) that methylates A-3 on the top and bottom strand of the sequence 5'-GAAN(6)RTCG-3' (for EcoR124I) and 5'-GAAN(7)RTCG-3' (for EcoR124II). In the presence of the R subunit the complex can also act as an endonuclease, binding to the same target sequence but cutting the DNA some distance from this site. Whether the DNA is cut or modified depends on the methylation state of the target sequence. When the target site is unmodified, the DNA is cut. When the target site is hemimethylated, the complex acts as a maintenance MTase modifying the DNA so that both strands become methylated. After locating a non-methylated recognition site, the enzyme complex serves as a molecular motor that translocates DNA in an ATP-dependent manner until a collision occurs that triggers cleavage. The R(1)M(2)S(1) complex translocates an average of 555 bp/second on nicked DNA; the R(2)M(2)S(1) complex translocates at double that speed. The 2 R subunit motors are independent and track along the helical pitch of the DNA, inducing positive supercoiling ahead of themselves. In Escherichia coli, this protein is Type I restriction enzyme EcoR124I/EcoR124II methylase subunit (hsdM).